Consider the following 193-residue polypeptide: MEAIKVHIGKTVALMNDNIDTDQIIPKSFLKRIERTGFGEFLFDSWRYLPNRKPNPDFPLNAPDRQEATILITGDNFGCGSSREHAAWALLDYRFRVIIAGSYSDIFYMNCTKNGVLPIVLPREAREKLAKITAEEKVTIDLPKQQVISSVGTYPFEIDATWKNKFINGLDDIAITFEHIDAIKAYEQKVDSI.

It belongs to the LeuD family. LeuD type 1 subfamily. In terms of assembly, heterodimer of LeuC and LeuD.

It carries out the reaction (2R,3S)-3-isopropylmalate = (2S)-2-isopropylmalate. The protein operates within amino-acid biosynthesis; L-leucine biosynthesis; L-leucine from 3-methyl-2-oxobutanoate: step 2/4. Functionally, catalyzes the isomerization between 2-isopropylmalate and 3-isopropylmalate, via the formation of 2-isopropylmaleate. The sequence is that of 3-isopropylmalate dehydratase small subunit from Listeria innocua serovar 6a (strain ATCC BAA-680 / CLIP 11262).